The sequence spans 119 residues: Large ribosomal subunit protein bL20c (119 aa).

This sequence belongs to the bacterial ribosomal protein bL20 family.

Its subcellular location is the plastid. It is found in the chloroplast. Binds directly to 23S ribosomal RNA and is necessary for the in vitro assembly process of the 50S ribosomal subunit. It is not involved in the protein synthesizing functions of that subunit. This is Large ribosomal subunit protein bL20c (rpl20) from Pinus thunbergii (Japanese black pine).